Consider the following 244-residue polypeptide: MRRPAILAAAVLLAPLAACSTVKEAVKGPDLAPVGYPAPLAPMQQQYVSAREPAPQAASANSLWRVGARAFFNDQRASRVGDIVTVMIDIDDSASTKNATNSSRTANMKAGVPHLLGMESSLGKFLPGGFDPASALETNSTTTNAGSGGVSRSEKISLTIAAVVSQVLPNGNMVIQGTQEVRTNAELRQLTVAGIVRPEDISSANTIRHTQIAEARISYGGRGDISRVQKTPAGQSLVEKFSPF.

An N-terminal signal peptide occupies residues 1-18; it reads MRRPAILAAAVLLAPLAA. Cysteine 19 carries the N-palmitoyl cysteine lipid modification. The S-diacylglycerol cysteine moiety is linked to residue cysteine 19.

Belongs to the FlgH family. The basal body constitutes a major portion of the flagellar organelle and consists of five rings (E,L,P,S, and M) mounted on a central rod.

It localises to the cell outer membrane. Its subcellular location is the bacterial flagellum basal body. Functionally, assembles around the rod to form the L-ring and probably protects the motor/basal body from shearing forces during rotation. The protein is Flagellar L-ring protein (flgH) of Caulobacter vibrioides (strain ATCC 19089 / CIP 103742 / CB 15) (Caulobacter crescentus).